The chain runs to 331 residues: 4-hydroxy-3-methylbut-2-enyl diphosphate reductase (331 aa).

Cys-12 is a binding site for [4Fe-4S] cluster. Residues His-43 and His-81 each contribute to the (2E)-4-hydroxy-3-methylbut-2-enyl diphosphate site. Positions 43 and 81 each coordinate dimethylallyl diphosphate. Positions 43 and 81 each coordinate isopentenyl diphosphate. Position 103 (Cys-103) interacts with [4Fe-4S] cluster. His-131 is a (2E)-4-hydroxy-3-methylbut-2-enyl diphosphate binding site. His-131 is a dimethylallyl diphosphate binding site. His-131 is a binding site for isopentenyl diphosphate. The active-site Proton donor is Glu-133. Thr-170 contributes to the (2E)-4-hydroxy-3-methylbut-2-enyl diphosphate binding site. [4Fe-4S] cluster is bound at residue Cys-198. Residues Ser-226, Asn-228, and Ser-271 each contribute to the (2E)-4-hydroxy-3-methylbut-2-enyl diphosphate site. 3 residues coordinate dimethylallyl diphosphate: Ser-226, Asn-228, and Ser-271. Isopentenyl diphosphate is bound by residues Ser-226, Asn-228, and Ser-271.

It belongs to the IspH family. It depends on [4Fe-4S] cluster as a cofactor.

It carries out the reaction isopentenyl diphosphate + 2 oxidized [2Fe-2S]-[ferredoxin] + H2O = (2E)-4-hydroxy-3-methylbut-2-enyl diphosphate + 2 reduced [2Fe-2S]-[ferredoxin] + 2 H(+). The catalysed reaction is dimethylallyl diphosphate + 2 oxidized [2Fe-2S]-[ferredoxin] + H2O = (2E)-4-hydroxy-3-methylbut-2-enyl diphosphate + 2 reduced [2Fe-2S]-[ferredoxin] + 2 H(+). It participates in isoprenoid biosynthesis; dimethylallyl diphosphate biosynthesis; dimethylallyl diphosphate from (2E)-4-hydroxy-3-methylbutenyl diphosphate: step 1/1. Its pathway is isoprenoid biosynthesis; isopentenyl diphosphate biosynthesis via DXP pathway; isopentenyl diphosphate from 1-deoxy-D-xylulose 5-phosphate: step 6/6. Its function is as follows. Catalyzes the conversion of 1-hydroxy-2-methyl-2-(E)-butenyl 4-diphosphate (HMBPP) into a mixture of isopentenyl diphosphate (IPP) and dimethylallyl diphosphate (DMAPP). Acts in the terminal step of the DOXP/MEP pathway for isoprenoid precursor biosynthesis. In Listeria monocytogenes serovar 1/2a (strain ATCC BAA-679 / EGD-e), this protein is 4-hydroxy-3-methylbut-2-enyl diphosphate reductase.